The sequence spans 94 residues: Large ribosomal subunit protein bL25 (94 aa).

It belongs to the bacterial ribosomal protein bL25 family. In terms of assembly, part of the 50S ribosomal subunit; part of the 5S rRNA/L5/L18/L25 subcomplex. Contacts the 5S rRNA. Binds to the 5S rRNA independently of L5 and L18.

In terms of biological role, this is one of the proteins that binds to the 5S RNA in the ribosome where it forms part of the central protuberance. This Escherichia coli (strain K12 / DH10B) protein is Large ribosomal subunit protein bL25.